Reading from the N-terminus, the 342-residue chain is 4-hydroxy-2-oxovalerate aldolase (342 aa).

One can recognise a Pyruvate carboxyltransferase domain in the interval 7-257 (VWITEVALRD…KTGIDLYKMM (251 aa)). Residue 15 to 16 (RD) participates in substrate binding. D16 is a binding site for Mn(2+). The Proton acceptor role is filled by H19. Substrate is bound by residues S169 and H196. Mn(2+) is bound by residues H196 and H198. Y287 provides a ligand contact to substrate.

This sequence belongs to the 4-hydroxy-2-oxovalerate aldolase family.

The catalysed reaction is (S)-4-hydroxy-2-oxopentanoate = acetaldehyde + pyruvate. In Geobacillus stearothermophilus (Bacillus stearothermophilus), this protein is 4-hydroxy-2-oxovalerate aldolase (pheE).